Reading from the N-terminus, the 148-residue chain is Large ribosomal subunit protein bL9 (148 aa).

This sequence belongs to the bacterial ribosomal protein bL9 family.

Its function is as follows. Binds to the 23S rRNA. This chain is Large ribosomal subunit protein bL9, found in Prosthecochloris aestuarii (strain DSM 271 / SK 413).